The primary structure comprises 78 residues: DNA-directed RNA polymerase subunit Rpo5 (78 aa).

It belongs to the archaeal Rpo5/eukaryotic RPB5 RNA polymerase subunit family. As to quaternary structure, part of the RNA polymerase complex.

It localises to the cytoplasm. The enzyme catalyses RNA(n) + a ribonucleoside 5'-triphosphate = RNA(n+1) + diphosphate. DNA-dependent RNA polymerase (RNAP) catalyzes the transcription of DNA into RNA using the four ribonucleoside triphosphates as substrates. The protein is DNA-directed RNA polymerase subunit Rpo5 of Methanococcus vannielii (strain ATCC 35089 / DSM 1224 / JCM 13029 / OCM 148 / SB).